A 507-amino-acid chain; its full sequence is Cytochrome c-552 (507 aa).

Residues 1–22 (MTKFKLLLAGSLVAIVSMGLLA) form the signal peptide. Heme c is bound by residues His102, Cys130, Cys133, Lys134, Cys168, Cys171, His172, Cys211, Cys214, and His215. Ca(2+)-binding residues include Glu217, Tyr218, Lys274, and Gln276. Position 218 (Tyr218) interacts with substrate. His277 is a binding site for substrate. Heme c is bound by residues His288, Cys295, Cys298, His299, His313, Cys326, Cys329, His330, and His405.

Belongs to the cytochrome c-552 family. As to quaternary structure, homodimer. Interacts with NrfH. May form a heterotetramer with NrfH. Requires Ca(2+) as cofactor. Heme c is required as a cofactor.

Its subcellular location is the periplasm. The catalysed reaction is 6 Fe(III)-[cytochrome c] + NH4(+) + 2 H2O = 6 Fe(II)-[cytochrome c] + nitrite + 8 H(+). It participates in nitrogen metabolism; nitrate reduction (assimilation). Functionally, catalyzes the reduction of nitrite to ammonia, consuming six electrons in the process. Has very low activity toward hydroxylamine, and even lower activity toward sulfite. Sulfite reductase activity is maximal at neutral pH. This is Cytochrome c-552 (nrfA) from Wolinella succinogenes (strain ATCC 29543 / DSM 1740 / CCUG 13145 / JCM 31913 / LMG 7466 / NCTC 11488 / FDC 602W) (Vibrio succinogenes).